Here is a 905-residue protein sequence, read N- to C-terminus: Sun domain-containing protein 1 (905 aa).

Disordered stretches follow at residues 1–21 (MSGD…LPLQ), 41–166 (NNTV…ILKQ), and 207–242 (QQQQ…IDNN). Topologically, residues 1 to 290 (MSGDYKPNYQ…NNNNKVNFKQ (290 aa)) are nuclear. Low complexity-rich tracts occupy residues 41–67 (NNTV…SSYL) and 75–101 (SNQI…ASSS). Positions 107 to 116 (KVDHNSHNNN) are enriched in basic and acidic residues. Acidic residues predominate over residues 117 to 126 (DDDDIEDDVD). Positions 129 to 146 (YSTNNASSNILHNRFSNS) are enriched in polar residues. Positions 170 to 221 (LYNHLNNQIQQQQQQQQQQQQQQQQQQQQQQQQQQQQQQQQQQQRNNNNNSN) form a coiled coil. The span at 207 to 227 (QQQQQQQRNNNNNSNSSNNNN) shows a compositional bias: low complexity. The helical transmembrane segment at 291-311 (AIWIFIFSVLFIGCLLGLFST) threads the bilayer. Residues 312-905 (NFYGIHIYFP…IEKQQQSDEL (594 aa)) lie on the Perinuclear space side of the membrane. Coiled-coil stretches lie at residues 359-456 (KKNE…QLIQ) and 504-609 (REFN…TQQF). One can recognise an SUN domain in the interval 662 to 860 (GASIEYNALH…YRFRVHGYQI (199 aa)). Residues 864 to 901 (EQEQIQIIQEEQSFKQEEINQQQIEQIEQIEQIEKQQQ) are a coiled coil.

As to quaternary structure, homodimer and homooligomer.

It localises to the nucleus membrane. May have an important role in defining the spacing of the nuclear envelope lumen. Essential for centrosome attachment to the nucleus, maintenance of correct ploidy, proper mitosis, association of the centromere cluster with the centrosome and the maintenance of genome stability. Requires direct chromatin binding for inner nuclear membrane targeting. This Dictyostelium discoideum (Social amoeba) protein is Sun domain-containing protein 1 (sun1).